The chain runs to 342 residues: 6-hydroxytryprostatin B O-methyltransferase (342 aa).

Asp-201 serves as a coordination point for S-adenosyl-L-methionine. His-244 serves as the catalytic Proton acceptor.

This sequence belongs to the class I-like SAM-binding methyltransferase superfamily. Cation-independent O-methyltransferase family. In terms of assembly, homodimer.

It catalyses the reaction 6-hydroxytryprostatin B + S-adenosyl-L-methionine = tryprostatin A + S-adenosyl-L-homocysteine + H(+). Its pathway is mycotoxin biosynthesis. Its function is as follows. 6-hydroxytryprostatin B O-methyltransferase; part of the gene cluster that mediates the biosynthesis of fumitremorgins, indole alkaloids that carry not only intriguing chemical structures, but also interesting biological and pharmacological activities. The biosynthesis of fumitremorgin-type alkaloids begins by condensation of the two amino acids L-tryptophan and L-proline to brevianamide F, catalyzed by the non-ribosomal peptide synthetase ftmA. Brevianamide F is then prenylated by the prenyltransferase ftmPT1/ftmB in the presence of dimethylallyl diphosphate, resulting in the formation of tryprostatin B. The three cytochrome P450 monooxygenases, ftmP450-1/ftmC, ftmP450-2/ftmE and ftmP450-3/FtmG, are responsible for the conversion of tryprostatin B to 6-hydroxytryprostatin B, tryprostatin A to fumitremorgin C and fumitremorgin C to 12,13-dihydroxyfumitremorgin C, respectively. The putative methyltransferase ftmMT/ftmD is expected for the conversion of 6-hydroxytryprostatin B to tryprostatin A. FtmPT2/FtmH catalyzes the prenylation of 12,13-dihydroxyfumitre-morgin C in the presence of dimethylallyl diphosphate, resulting in the formation of fumitremorgin B. Fumitremorgin B is further converted to verruculogen by ftmOx1/ftmF via the insertion of an endoperoxide bond between the two prenyl moieties. In some fungal species, verruculogen is further converted to fumitremorgin A, but the enzymes involved in this step have not been identified yet. The polypeptide is 6-hydroxytryprostatin B O-methyltransferase (Aspergillus fumigatus (strain ATCC MYA-4609 / CBS 101355 / FGSC A1100 / Af293) (Neosartorya fumigata)).